A 257-amino-acid chain; its full sequence is 5'-nucleotidase SurE (257 aa).

4 residues coordinate a divalent metal cation: aspartate 15, aspartate 16, serine 46, and asparagine 99.

It belongs to the SurE nucleotidase family. A divalent metal cation is required as a cofactor.

It localises to the cytoplasm. It carries out the reaction a ribonucleoside 5'-phosphate + H2O = a ribonucleoside + phosphate. In terms of biological role, nucleotidase that shows phosphatase activity on nucleoside 5'-monophosphates. The protein is 5'-nucleotidase SurE of Aliivibrio fischeri (strain ATCC 700601 / ES114) (Vibrio fischeri).